The primary structure comprises 191 residues: Small ribosomal subunit protein uS11m (191 aa).

The segment at Pro37–Pro62 is disordered. Residues Arg38 to Ala53 show a composition bias toward basic and acidic residues.

Belongs to the universal ribosomal protein uS11 family. Component of the mitochondrial ribosome small subunit (28S) which comprises a 12S rRNA and about 30 distinct proteins.

The protein resides in the mitochondrion. This is Small ribosomal subunit protein uS11m (Mrps11) from Mus musculus (Mouse).